The sequence spans 78 residues: UPF0401 protein YubL (78 aa).

This sequence belongs to the UPF0401 family.

The polypeptide is UPF0401 protein YubL (yubL) (Salmonella typhi).